The primary structure comprises 247 residues: ATP synthase subunit a, chloroplastic (247 aa).

Transmembrane regions (helical) follow at residues 38 to 58 (QVLITSWVVIAILLGSAAIAV), 95 to 115 (VPFIGTMFLFIFVSNWSGALL), 134 to 154 (INTTVALALLTSVAYFYAGLT), 199 to 219 (LVVVVLVSLVPLVVPIPVMFL), and 220 to 240 (GLFTSGIQALIFATLAAAYIG).

The protein belongs to the ATPase A chain family. F-type ATPases have 2 components, CF(1) - the catalytic core - and CF(0) - the membrane proton channel. CF(1) has five subunits: alpha(3), beta(3), gamma(1), delta(1), epsilon(1). CF(0) has four main subunits: a, b, b' and c.

It is found in the plastid. It localises to the chloroplast thylakoid membrane. Its function is as follows. Key component of the proton channel; it plays a direct role in the translocation of protons across the membrane. The chain is ATP synthase subunit a, chloroplastic from Calycanthus floridus var. glaucus (Eastern sweetshrub).